The sequence spans 916 residues: Protein translocase subunit SecA (916 aa).

Residues Gln-87, 105 to 109 (GEGKT), and Asp-512 each bind ATP. The segment at 857–916 (QHAEAPSMEQAVAGEEEELPEGPAPVVPLEPVRNEQKIGRNEPCPCGSGKKYKHCHGQLD) is disordered. Residues Cys-900, Cys-902, Cys-911, and His-912 each coordinate Zn(2+). Over residues 906–916 (KKYKHCHGQLD) the composition is skewed to basic residues.

This sequence belongs to the SecA family. As to quaternary structure, monomer and homodimer. Part of the essential Sec protein translocation apparatus which comprises SecA, SecYEG and auxiliary proteins SecDF-YajC and YidC. Zn(2+) serves as cofactor.

Its subcellular location is the cell inner membrane. The protein localises to the cytoplasm. The catalysed reaction is ATP + H2O + cellular proteinSide 1 = ADP + phosphate + cellular proteinSide 2.. Its function is as follows. Part of the Sec protein translocase complex. Interacts with the SecYEG preprotein conducting channel. Has a central role in coupling the hydrolysis of ATP to the transfer of proteins into and across the cell membrane, serving both as a receptor for the preprotein-SecB complex and as an ATP-driven molecular motor driving the stepwise translocation of polypeptide chains across the membrane. In Pseudomonas aeruginosa (strain UCBPP-PA14), this protein is Protein translocase subunit SecA.